Reading from the N-terminus, the 317-residue chain is tRNA dimethylallyltransferase (317 aa).

Residue 19–26 participates in ATP binding; it reads GPTASGKS. 21 to 26 is a binding site for substrate; the sequence is TASGKS. Residues 44-47 form an interaction with substrate tRNA region; the sequence is DSMQ.

It belongs to the IPP transferase family. In terms of assembly, monomer. Requires Mg(2+) as cofactor.

The catalysed reaction is adenosine(37) in tRNA + dimethylallyl diphosphate = N(6)-dimethylallyladenosine(37) in tRNA + diphosphate. Its function is as follows. Catalyzes the transfer of a dimethylallyl group onto the adenine at position 37 in tRNAs that read codons beginning with uridine, leading to the formation of N6-(dimethylallyl)adenosine (i(6)A). The protein is tRNA dimethylallyltransferase of Methylorubrum populi (strain ATCC BAA-705 / NCIMB 13946 / BJ001) (Methylobacterium populi).